The chain runs to 288 residues: NAD kinase (288 aa).

The active-site Proton acceptor is the D68. Residues 68 to 69, 142 to 143, R153, D172, and Q242 contribute to the NAD(+) site; these read DG and ND.

The protein belongs to the NAD kinase family. A divalent metal cation is required as a cofactor.

It localises to the cytoplasm. The catalysed reaction is NAD(+) + ATP = ADP + NADP(+) + H(+). In terms of biological role, involved in the regulation of the intracellular balance of NAD and NADP, and is a key enzyme in the biosynthesis of NADP. Catalyzes specifically the phosphorylation on 2'-hydroxyl of the adenosine moiety of NAD to yield NADP. The chain is NAD kinase from Desulforamulus reducens (strain ATCC BAA-1160 / DSM 100696 / MI-1) (Desulfotomaculum reducens).